Here is a 641-residue protein sequence, read N- to C-terminus: DNA mismatch repair protein MutL (641 aa).

Positions 345–445 (PAAVAPPAPA…GDTSLGDTSP (101 aa)) are disordered. The span at 419–429 (PRTEPATRTGE) shows a compositional bias: basic and acidic residues. The segment covering 432–442 (GISSGDTSLGD) has biased composition (polar residues).

Belongs to the DNA mismatch repair MutL/HexB family.

In terms of biological role, this protein is involved in the repair of mismatches in DNA. It is required for dam-dependent methyl-directed DNA mismatch repair. May act as a 'molecular matchmaker', a protein that promotes the formation of a stable complex between two or more DNA-binding proteins in an ATP-dependent manner without itself being part of a final effector complex. This chain is DNA mismatch repair protein MutL, found in Azotobacter vinelandii (strain DJ / ATCC BAA-1303).